The primary structure comprises 162 residues: MLRAVGSLLRLGRGLTVRCGPGAPLEATRRPAPALPPRGLPCYSSGGAPSNSGPQGHGEIHRVPTQRRPSQFDKKILLWTGRFKSMEEIPPRIPPEMIDTARNKARVKACYIMIGLTIIACFAVIVSAKRAVERHESLTSWNLAKKAKWREEAALAAQAKAK.

Residues 26–69 (EATRRPAPALPPRGLPCYSSGGAPSNSGPQGHGEIHRVPTQRRP) are disordered. The chain crosses the membrane as a helical span at residues 107 to 127 (VKACYIMIGLTIIACFAVIVS).

It belongs to the UPF0389 family.

Its subcellular location is the membrane. This Homo sapiens (Human) protein is Protein FAM162B (FAM162B).